The primary structure comprises 77 residues: Acyl carrier protein (77 aa).

The 76-residue stretch at Ser-2–Ser-77 folds into the Carrier domain. At Ser-37 the chain carries O-(pantetheine 4'-phosphoryl)serine.

It belongs to the acyl carrier protein (ACP) family. In terms of processing, 4'-phosphopantetheine is transferred from CoA to a specific serine of apo-ACP by AcpS. This modification is essential for activity because fatty acids are bound in thioester linkage to the sulfhydryl of the prosthetic group.

The protein localises to the cytoplasm. Its pathway is lipid metabolism; fatty acid biosynthesis. Carrier of the growing fatty acid chain in fatty acid biosynthesis. The chain is Acyl carrier protein from Ruegeria pomeroyi (strain ATCC 700808 / DSM 15171 / DSS-3) (Silicibacter pomeroyi).